Reading from the N-terminus, the 138-residue chain is Large ribosomal subunit protein uL16 (138 aa).

Over residues 1–15 the composition is skewed to basic residues; the sequence is MLSPRKVKYRKKQRG. The disordered stretch occupies residues 1-21; sequence MLSPRKVKYRKKQRGRLSGEA.

Belongs to the universal ribosomal protein uL16 family. As to quaternary structure, part of the 50S ribosomal subunit.

Functionally, binds 23S rRNA and is also seen to make contacts with the A and possibly P site tRNAs. This chain is Large ribosomal subunit protein uL16, found in Borrelia duttonii (strain Ly).